A 355-amino-acid chain; its full sequence is Sesquiterpene synthase-like protein Agr11 (355 aa).

Belongs to the terpene synthase family.

The sequence is that of Sesquiterpene synthase-like protein Agr11 from Cyclocybe aegerita (Black poplar mushroom).